The sequence spans 276 residues: Rhomboid protease GlpG (276 aa).

6 helical membrane passes run 94–114 (GPFT…QNLL), 142–162 (AFMH…WYLG), 169–189 (IGSG…GFVQ), 192–212 (FSGP…GYVW), 229–249 (LILF…GMAI), and 252–272 (GAHV…TLHG). The active-site Nucleophile is the serine 201. Histidine 254 is an active-site residue.

It belongs to the peptidase S54 family.

The protein localises to the cell inner membrane. The enzyme catalyses Cleaves type-1 transmembrane domains using a catalytic dyad composed of serine and histidine that are contributed by different transmembrane domains.. In terms of biological role, rhomboid-type serine protease that catalyzes intramembrane proteolysis. The sequence is that of Rhomboid protease GlpG from Klebsiella pneumoniae subsp. pneumoniae (strain ATCC 700721 / MGH 78578).